The primary structure comprises 149 residues: Large ribosomal subunit protein uL15C (149 aa).

The disordered stretch occupies residues 21-40 (RIGKHRKQRGGRGNAGGQHH).

It belongs to the universal ribosomal protein uL15 family. Component of the large ribosomal subunit.

It is found in the cytoplasm. The protein resides in the cytosol. The protein localises to the endoplasmic reticulum. Component of the large ribosomal subunit. The ribosome is a large ribonucleoprotein complex responsible for the synthesis of proteins in the cell. This is Large ribosomal subunit protein uL15C (rpl27a-3) from Entamoeba histolytica (strain ATCC 30459 / HM-1:IMSS / ABRM).